The sequence spans 220 residues: Adenylate kinase (220 aa).

10–15 (GAGKGT) provides a ligand contact to ATP. Residues 30–59 (STGDMLRAAVKAGTPLGLKAKEVMDGGNLV) are NMP. Residues Thr31, Arg36, 57–59 (NLV), 85–88 (GFPR), and Gln92 contribute to the AMP site. The tract at residues 122–159 (GRRVHPASGRTYHIRFNPPQTAGMDDETGEPLVQRADD) is LID. ATP-binding positions include Arg123 and 132–133 (TY). AMP is bound by residues Arg156 and Arg167. Gly205 contacts ATP.

Belongs to the adenylate kinase family. As to quaternary structure, monomer.

The protein localises to the cytoplasm. It carries out the reaction AMP + ATP = 2 ADP. The protein operates within purine metabolism; AMP biosynthesis via salvage pathway; AMP from ADP: step 1/1. Its function is as follows. Catalyzes the reversible transfer of the terminal phosphate group between ATP and AMP. Plays an important role in cellular energy homeostasis and in adenine nucleotide metabolism. The protein is Adenylate kinase of Chlorobium luteolum (strain DSM 273 / BCRC 81028 / 2530) (Pelodictyon luteolum).